The following is a 551-amino-acid chain: Glucans biosynthesis protein D (551 aa).

The tat-type signal signal peptide spans 1–32 (MDRRRFIKGSMAMAAVCGTSGIASLFSQAAFA).

It belongs to the OpgD/OpgG family. In terms of processing, predicted to be exported by the Tat system. The position of the signal peptide cleavage has not been experimentally proven.

The protein resides in the periplasm. It functions in the pathway glycan metabolism; osmoregulated periplasmic glucan (OPG) biosynthesis. Functionally, probably involved in the control of the structural glucose backbone of osmoregulated periplasmic glucans (OPGs). In Shigella dysenteriae serotype 1 (strain Sd197), this protein is Glucans biosynthesis protein D.